The chain runs to 279 residues: Diaminopimelate epimerase (279 aa).

The substrate site is built by Asn13, Gln46, and Asn66. Cys75 acts as the Proton donor in catalysis. Residues Gly76–Asn77, Asn161, Asn194, and Glu212–Arg213 contribute to the substrate site. Catalysis depends on Cys221, which acts as the Proton acceptor. Position 222–223 (Gly222–Thr223) interacts with substrate.

Belongs to the diaminopimelate epimerase family. As to quaternary structure, homodimer.

The protein localises to the cytoplasm. The catalysed reaction is (2S,6S)-2,6-diaminopimelate = meso-2,6-diaminopimelate. It functions in the pathway amino-acid biosynthesis; L-lysine biosynthesis via DAP pathway; DL-2,6-diaminopimelate from LL-2,6-diaminopimelate: step 1/1. Catalyzes the stereoinversion of LL-2,6-diaminopimelate (L,L-DAP) to meso-diaminopimelate (meso-DAP), a precursor of L-lysine and an essential component of the bacterial peptidoglycan. The chain is Diaminopimelate epimerase from Alkalilimnicola ehrlichii (strain ATCC BAA-1101 / DSM 17681 / MLHE-1).